The following is a 560-amino-acid chain: Glucose-6-phosphate isomerase, cytosolic (560 aa).

N-acetylalanine is present on alanine 2. Glutamate 361 serves as the catalytic Proton donor. Residues histidine 392 and lysine 517 contribute to the active site.

The protein belongs to the GPI family. Homodimer.

The protein localises to the cytoplasm. The catalysed reaction is alpha-D-glucose 6-phosphate = beta-D-fructose 6-phosphate. The protein operates within carbohydrate degradation; glycolysis; D-glyceraldehyde 3-phosphate and glycerone phosphate from D-glucose: step 2/4. Its activity is regulated as follows. Inhibited by glycerol-3-P (G3P). This is Glucose-6-phosphate isomerase, cytosolic (PGIC) from Arabidopsis thaliana (Mouse-ear cress).